The sequence spans 268 residues: Phosphatidylglycerol--prolipoprotein diacylglyceryl transferase (268 aa).

Transmembrane regions (helical) follow at residues 14–34 (LGPIKIHWYGLMYLLGIFAGW), 57–77 (LTFYVALGVILGGRIGYIIFY), 90–110 (FFLWDGGMSFHGGFIGVLIAF), and 117–137 (IGANFFDLGEFVAPVIPIGLG). Arginine 140 provides a ligand contact to a 1,2-diacyl-sn-glycero-3-phospho-(1'-sn-glycerol). 3 helical membrane passes run 174-194 (QLFEFFFEGVVLFSVLWLVTI), 200-220 (YLVLGLFMFLYGYARFICEFF), and 238-258 (GQILSIPMILLGAVILIAVFI).

This sequence belongs to the Lgt family.

It localises to the cell inner membrane. It catalyses the reaction L-cysteinyl-[prolipoprotein] + a 1,2-diacyl-sn-glycero-3-phospho-(1'-sn-glycerol) = an S-1,2-diacyl-sn-glyceryl-L-cysteinyl-[prolipoprotein] + sn-glycerol 1-phosphate + H(+). The protein operates within protein modification; lipoprotein biosynthesis (diacylglyceryl transfer). Catalyzes the transfer of the diacylglyceryl group from phosphatidylglycerol to the sulfhydryl group of the N-terminal cysteine of a prolipoprotein, the first step in the formation of mature lipoproteins. This Francisella tularensis subsp. holarctica (strain FTNF002-00 / FTA) protein is Phosphatidylglycerol--prolipoprotein diacylglyceryl transferase.